The following is a 666-amino-acid chain: Probable potassium transport system protein Kup (666 aa).

The next 12 helical transmembrane spans lie at 16 to 36, 58 to 78, 100 to 120, 141 to 161, 165 to 185, 221 to 241, 253 to 273, 294 to 314, 343 to 363, 373 to 393, 399 to 419, and 424 to 444; these read GFIIALGIVYGDIGTSPLYTM, ISLIIWTLTLITTIKYVLIAL, PWLIIPAMIGGATLLSDGALT, IYQNQTNIIITTLVILIVLFG, FGTGFIGKIFGPVMFIWFSFL, IFILGSIFLATTGAEALYSDL, WPFVKMCIVWSYCGQAAWILA, VYLVSLATLAAIIASQALISG, LYIPVINWILFAVTSCTVLAF, YGLAITITMLMTTILLKYYLI, PILAHLAMAFFALVEFIFFLA, and FMHGGYAVVILALAIVFVMFI.

It belongs to the HAK/KUP transporter (TC 2.A.72) family.

Its subcellular location is the cell membrane. It catalyses the reaction K(+)(in) + H(+)(in) = K(+)(out) + H(+)(out). Transport of potassium into the cell. Likely operates as a K(+):H(+) symporter. This chain is Probable potassium transport system protein Kup, found in Streptococcus pyogenes serotype M4 (strain MGAS10750).